A 323-amino-acid chain; its full sequence is L-lactate dehydrogenase 1 (323 aa).

Residues V17, D38, R43, Y68, and 82–83 (GA) contribute to the NAD(+) site. 2 residues coordinate substrate: Q85 and R91. NAD(+) contacts are provided by residues S104, 121 to 123 (AAN), and S146. 123 to 126 (NPVD) serves as a coordination point for substrate. 151 to 154 (DTGR) is a substrate binding site. The Proton acceptor role is filled by H178. The residue at position 223 (Y223) is a Phosphotyrosine. T232 contributes to the substrate binding site.

Belongs to the LDH/MDH superfamily. LDH family. As to quaternary structure, homotetramer.

Its subcellular location is the cytoplasm. The catalysed reaction is (S)-lactate + NAD(+) = pyruvate + NADH + H(+). It functions in the pathway fermentation; pyruvate fermentation to lactate; (S)-lactate from pyruvate: step 1/1. Catalyzes the conversion of lactate to pyruvate. This chain is L-lactate dehydrogenase 1, found in Lactobacillus johnsonii (strain CNCM I-12250 / La1 / NCC 533).